The following is a 431-amino-acid chain: C2H2 type master regulator of conidiophore development brlA (431 aa).

Disordered stretches follow at residues 29-51, 211-275, and 287-306; these read MTSSFSPLESPTPTPTSLYSHGS, TPQQ…SEEY, and IRTHRQPSRKPSKKQLVRSN. Positions 30–48 are enriched in low complexity; sequence TSSFSPLESPTPTPTSLYS. The span at 225-265 shows a compositional bias: polar residues; the sequence is PSSNYSDFPASLQTFKPHTPSTPVRSLSLGTPRSDTPQSRM. The segment covering 287–302 has biased composition (basic residues); sequence IRTHRQPSRKPSKKQL. C2H2-type zinc fingers lie at residues 321–345 and 351–376; these read FKCKEPGCKGRFKRQEHLKRHMKSH and HVCWVPGCHRAFSRSDNLNAHYTKTH. A disordered region spans residues 390 to 412; sequence DETSPDYDPEFRGQLTPDGRPIY.

It is found in the nucleus. Functionally, brlA, abaA and wetA are pivotal regulators of conidiophore development and conidium maturation. They act individually and together to regulate their own expression and that of numerous other sporulation-specific genes. Binds promoters of target genes at brlA response elements (BREs) containing the conserved sequence 5'-(C/A)(A/G)AGGG(G/A)-3'. Regulates the expression levels of seven secondary metabolism gene clusters including a down-regulated cluster putatively involved in the biosynthesis of the mycotoxins roquefortine C and meleagrin. Negatively regulates the expression of cellulase genes. This chain is C2H2 type master regulator of conidiophore development brlA, found in Penicillium oxalicum (strain 114-2 / CGMCC 5302) (Penicillium decumbens).